Consider the following 247-residue polypeptide: UDP-2,3-diacylglucosamine hydrolase (247 aa).

Residues Asp-8, His-10, Asp-41, Asn-79, and His-114 each contribute to the Mn(2+) site. Substrate is bound at residue 79–80 (NR). 5 residues coordinate substrate: Asp-122, Ser-160, Asp-171, Asn-174, and His-202. Positions 202 and 204 each coordinate Mn(2+).

It belongs to the LpxH family. The cofactor is Mn(2+).

The protein localises to the cell inner membrane. It catalyses the reaction UDP-2-N,3-O-bis[(3R)-3-hydroxytetradecanoyl]-alpha-D-glucosamine + H2O = 2-N,3-O-bis[(3R)-3-hydroxytetradecanoyl]-alpha-D-glucosaminyl 1-phosphate + UMP + 2 H(+). It functions in the pathway glycolipid biosynthesis; lipid IV(A) biosynthesis; lipid IV(A) from (3R)-3-hydroxytetradecanoyl-[acyl-carrier-protein] and UDP-N-acetyl-alpha-D-glucosamine: step 4/6. In terms of biological role, hydrolyzes the pyrophosphate bond of UDP-2,3-diacylglucosamine to yield 2,3-diacylglucosamine 1-phosphate (lipid X) and UMP by catalyzing the attack of water at the alpha-P atom. Involved in the biosynthesis of lipid A, a phosphorylated glycolipid that anchors the lipopolysaccharide to the outer membrane of the cell. The polypeptide is UDP-2,3-diacylglucosamine hydrolase (Xanthomonas oryzae pv. oryzae (strain MAFF 311018)).